The primary structure comprises 130 residues: Large ribosomal subunit protein bL19 (130 aa).

This sequence belongs to the bacterial ribosomal protein bL19 family.

Functionally, this protein is located at the 30S-50S ribosomal subunit interface and may play a role in the structure and function of the aminoacyl-tRNA binding site. The chain is Large ribosomal subunit protein bL19 from Cupriavidus taiwanensis (strain DSM 17343 / BCRC 17206 / CCUG 44338 / CIP 107171 / LMG 19424 / R1) (Ralstonia taiwanensis (strain LMG 19424)).